The following is a 1078-amino-acid chain: Teashirt homolog 1-A (1078 aa).

Disordered regions lie at residues 1 to 110, 140 to 197, and 271 to 300; these read MPRR…NVSY, KSNE…SNSA, and GHYR…MEME. Residues 26–36 show a composition bias toward acidic residues; the sequence is IEEDNLEDDGL. Polar residues predominate over residues 57-71; the sequence is PSYQNSPISSATNQD. The segment covering 143 to 197 has biased composition (low complexity); it reads ENSSPTTNTNKSSMSEATGSTSDPDTPTTIPSSSCTNTSTSISVTTSNSTNSNSA. C2H2-type zinc fingers lie at residues 248–272 and 309–333; these read FKCK…ETGH and LKCM…KTKH. Over residues 271-286 the composition is skewed to basic and acidic residues; sequence GHYRDDNKDRDAERTK. Positions 365 to 394 are disordered; sequence DSPEQAGISPGASVSESAKDPKAANPYVTP. The C2H2-type 3 zinc finger occupies 418–442; sequence LKCMECGSSHDSLQQLTAHMMVTGH. Disordered stretches follow at residues 472-524 and 850-877; these read LPPT…ENED and RLTP…EAMD. Residues 497–524 show a composition bias toward basic and acidic residues; it reads HSEEKKDPEKEKVNNCEVEKRIKEENED. Polar residues predominate over residues 853-862; it reads PKSSTPSTVS. The homeobox DNA-binding region spans 885–955; it reads RKGRQSNWNP…NVKYQLRRTG (71 aa). C2H2-type zinc fingers lie at residues 970–992 and 1038–1061; these read FFCN…LETH and FQCK…SKTH.

It belongs to the teashirt C2H2-type zinc-finger protein family.

The protein resides in the nucleus. Probable transcriptional regulator involved in developmental processes. May act as a transcriptional repressor (Potential). Involved in two major neuronal regionalization processes: primary anteroposterior (AP) axis patterning of the CNS and segmentation of the cranial neuronal crest (CNS) development. The sequence is that of Teashirt homolog 1-A (tshz1-a) from Xenopus laevis (African clawed frog).